The following is a 304-amino-acid chain: Thyroxine 5-deiodinase (304 aa).

The interval 1 to 23 (MPRQATSRLVVGEGEGSQGASGP) is disordered. Over 1-44 (MPRQATSRLVVGEGEGSQGASGPAATMLRSLLLHSLRLCAQTAS) the chain is Cytoplasmic. Residues 45-67 (CLVLFPRFLGTAFMLWLLDFLCI) form a helical; Signal-anchor for type II membrane protein membrane-spanning segment. Over 68-304 (RKHFLGRRRR…QLHGARPRRV (237 aa)) the chain is Extracellular. The interval 78 to 99 (GQPEPEVELNSEGEEVPPDDPP) is disordered. Over residues 82–95 (PEVELNSEGEEVPP) the composition is skewed to acidic residues. U170 is an active-site residue. Position 170 (U170) is a non-standard amino acid, selenocysteine.

Belongs to the iodothyronine deiodinase family. As to quaternary structure, monomer. Homodimer. May undergo minor heretodimerization with DIO1 and DIO2. As to expression, expressed in placenta and several fetal tissues.

Its subcellular location is the cell membrane. It localises to the endosome membrane. It carries out the reaction 3,3',5'-triiodo-L-thyronine + iodide + A + H(+) = L-thyroxine + AH2. It catalyses the reaction 3,3'-diiodo-L-thyronine + iodide + A + H(+) = 3,3',5-triiodo-L-thyronine + AH2. The catalysed reaction is 3-iodo-L-thyronine + iodide + A + H(+) = 3,5-diiodo-L-thyronine + AH2. The enzyme catalyses L-thyronine + iodide + A + H(+) = 3-iodo-L-thyronine + AH2. It carries out the reaction 3',5'-diiodo-L-thyronine + iodide + A + H(+) = 3,3',5'-triiodo-L-thyronine + AH2. It catalyses the reaction 3'-iodo-L-thyronine + iodide + A + H(+) = 3,3'-diiodo-L-thyronine + AH2. The catalysed reaction is 3,3',5'-triiodothyronamine + iodide + A + H(+) = 3,3',5,5'-tetraiodothyronamine + AH2. The enzyme catalyses 3',5'-diiodothyronamine + iodide + A + H(+) = 3,3',5'-triiodothyronamine + AH2. It carries out the reaction 3,3'-diiodothyronamine + iodide + A + H(+) = 3,3',5-triiodothyronamine + AH2. It catalyses the reaction 3-iodothyronamine + iodide + A + H(+) = 3,5-diiodothyronamine + AH2. The catalysed reaction is 3'-iodothyronamine + iodide + A + H(+) = 3,3'-diiodothyronamine + AH2. The enzyme catalyses thyronamine + iodide + A + H(+) = 3-iodothyronamine + AH2. Functionally, plays a crucial role in the metabolism of thyroid hormones (TH) and has specific roles in TH activation and inactivation by deiodination. Catalyzes the deiodination of L-thyroxine (T4) to 3,3',5'-triiodothyronine (rT3), 3,5,3'-triiodothyronine (T3) to 3,3'-diiodothyronine (3,3'-T2), 3,5-diiodothyronine (3,5-T2) to 3-monoiodothyronine (3-T1), rT3 to 3',5'-diiodothyronine (3',5'-T2) and 3,3'-T2 to 3'-monoiodothyronine (3'-T1) via inner-ring deiodination (IRD). Catalyzes the deiodination of 3-T1 to L-thyronine (T0) via outer-ring deiodination (ORD). Catalyzes the tyrosyl ring deiodinations of 3,3',5,5'-tetraiodothyronamine, 3,3',5'-triiodothyronamine, 3,5,3'-triiodothyronamine, 3,5-diiodothyronamine, 3,3'-diiodothyronamine and 3-iodothyronamine. This is Thyroxine 5-deiodinase (DIO3) from Homo sapiens (Human).